Here is a 761-residue protein sequence, read N- to C-terminus: Copper-exporting P-type ATPase (761 aa).

The residue at position 2 (threonine 2) is an N-acetylthreonine. Positions 14–78 (QRIQLRISGM…AVRRAGYQAD (65 aa)) constitute an HMA domain. Cu(+)-binding residues include cysteine 25 and cysteine 28. A run of 6 helical transmembrane segments spans residues 102 to 122 (LAIAAVLFVPVADLSVMFGVV), 129 to 149 (GWQWVLSALALPVVTWAAWPF), 164 to 184 (METLISVGITAATIWSLYTVF), 199 to 219 (LLGSDAIYFEVAAGVTVFVLV), 361 to 381 (VFVPAVLVIAALTAAGWLIAG), and 387 to 407 (AVSAALAVLVIACPCALGLAT). Aspartate 443 acts as the 4-aspartylphosphate intermediate in catalysis. The next 2 membrane-spanning stretches (helical) occupy residues 695 to 714 (MVWAFGYNIAAIPVAAAGLL) and 718 to 735 (VAGAAMAFSSFFVVSNSL).

The protein belongs to the cation transport ATPase (P-type) (TC 3.A.3) family. Type IB subfamily.

The protein resides in the cell membrane. The catalysed reaction is Cu(+)(in) + ATP + H2O = Cu(+)(out) + ADP + phosphate + H(+). ATPase activity is stimulated by Cu(+) ions. In terms of biological role, involved in copper export. Could be involved in the copper detoxification of mycobacterial cells. The polypeptide is Copper-exporting P-type ATPase (ctpA) (Mycobacterium tuberculosis (strain ATCC 25618 / H37Rv)).